A 1085-amino-acid chain; its full sequence is Activating transcription factor 7-interacting protein 1 (1085 aa).

9 disordered regions span residues 1–22 (MDNT…RASD), 47–109 (GKHE…VNVT), 127–245 (LGSN…NTDS), 329–381 (PNKS…VHSK), 469–499 (AAKE…ANAN), 517–560 (RNVG…TSSP), 650–843 (ASTN…TTIH), 889–910 (NSVR…QTGS), and 932–975 (GAPQ…ANTS). Over residues 54–64 (SDLNSPLSNTD) the composition is skewed to polar residues. Composition is skewed to basic and acidic residues over residues 82–91 (SEIKRPESRA) and 133–150 (NFHE…RESD). Polar residues-rich tracts occupy residues 151-165 (TPSG…NSFS) and 173-182 (NDITIISNSP). Basic and acidic residues-rich tracts occupy residues 347-379 (EREV…DSVH) and 469-479 (AAKEDMKKKQE). A coiled-coil region spans residues 446–480 (NKRHKTVLTELQAKITRLTKRFGAAKEDMKKKQEN). Low complexity-rich tracts occupy residues 487–499 (SSGK…ANAN), 529–547 (APVS…TPAS), and 651–666 (STNT…VSSP). The segment covering 667-717 (GVQRNSPASAGSVRTTLAVQAVSTTHPVAQTTRTSLPTVGTSGLHNSTSSR) has biased composition (polar residues). Low complexity predominate over residues 732–743 (TAPTEPPTITAP). Polar residues-rich tracts occupy residues 746–775 (ENQT…VTGS), 792–810 (SSQA…AQSI), and 830–843 (TGVP…TTIH). Positions 950–968 (PRPVHPAPLPEAPQPPRLP) are enriched in pro residues. One can recognise a Fibronectin type-III domain in the interval 976–1082 (LPQKPQLKLA…DPQSTDVISS (107 aa)).

It belongs to the MCAF family.

It is found in the nucleus. Its function is as follows. Recruiter that couples transcriptional factors to general transcription apparatus and thereby modulates transcription regulation and chromatin formation. Can both act as an activator or a repressor depending on the context. Mediates MBD1-dependent transcriptional repression, probably by recruiting complexes containing histone methyltransferase activity. May belong to a complex that represses transcription and couples DNA methylation and histone H3 'Lys-9' trimethylation (H3K9me3). In Gallus gallus (Chicken), this protein is Activating transcription factor 7-interacting protein 1 (ATF7IP).